We begin with the raw amino-acid sequence, 345 residues long: Beta-2-glycoprotein 1 (345 aa).

A signal peptide spans 1 to 19 (MPPPALVLLLGFLCHVAIA). 4 consecutive Sushi domains span residues 21 to 81 (RTCP…KCMP), 82 to 139 (RVCP…VCAP), 140 to 202 (ITCP…ECRE), and 203 to 262 (VRCP…SCKA). 11 cysteine pairs are disulfide-bonded: cysteine 23/cysteine 66, cysteine 51/cysteine 79, cysteine 84/cysteine 124, cysteine 110/cysteine 137, cysteine 142/cysteine 188, cysteine 174/cysteine 200, cysteine 205/cysteine 248, cysteine 234/cysteine 260, cysteine 264/cysteine 315, cysteine 300/cysteine 325, and cysteine 307/cysteine 345. O-linked (GalNAc...) threonine glycosylation occurs at threonine 33. The N-linked (GlcNAc...) asparagine glycan is linked to asparagine 92. 3 N-linked (GlcNAc...) asparagine glycosylation sites follow: asparagine 162, asparagine 183, and asparagine 193. Asparagine 253 carries N-linked (GlcNAc...) asparagine glycosylation. A sushi-like region spans residues 263 to 345 (SCKLSIKRAT…KTDASDVKPC (83 aa)).

Expressed by the liver and secreted in plasma.

The protein localises to the secreted. In terms of biological role, binds to various kinds of negatively charged substances such as heparin, phospholipids, and dextran sulfate. May prevent activation of the intrinsic blood coagulation cascade by binding to phospholipids on the surface of damaged cells. The polypeptide is Beta-2-glycoprotein 1 (APOH) (Bos taurus (Bovine)).